We begin with the raw amino-acid sequence, 257 residues long: Receptor expression-enhancing protein 4 (257 aa).

2 helical membrane passes run 1–21 (MVSW…YPAY) and 42–62 (WIVF…ISWF). 2 positions are modified to phosphoserine: S152 and S194. The segment at 177–257 (VPRRRPPIGY…KKAMPSDMDS (81 aa)) is disordered. Phosphothreonine is present on T196. 2 positions are modified to phosphoserine: S202 and S253.

Belongs to the DP1 family.

The protein localises to the endoplasmic reticulum membrane. Its function is as follows. Microtubule-binding protein required to ensure proper cell division and nuclear envelope reassembly by sequestering the endoplasmic reticulum away from chromosomes during mitosis. Probably acts by clearing the endoplasmic reticulum membrane from metaphase chromosomes. The protein is Receptor expression-enhancing protein 4 (Reep4) of Mus musculus (Mouse).